A 395-amino-acid polypeptide reads, in one-letter code: Elongation factor Ts, mitochondrial (395 aa).

The N-terminal 63 residues, 1-63, are a transit peptide targeting the mitochondrion; that stretch reads MAFARAVRRP…RGFGNFIRSF (63 aa).

The protein belongs to the EF-Ts family.

The protein resides in the mitochondrion. Associates with the EF-Tu.GDP complex and induces the exchange of GDP to GTP. It remains bound to the aminoacyl-tRNA.EF-Tu.GTP complex up to the GTP hydrolysis stage on the ribosome. The protein is Elongation factor Ts, mitochondrial of Arabidopsis thaliana (Mouse-ear cress).